Here is a 276-residue protein sequence, read N- to C-terminus: 4-deoxy-L-threo-5-hexosulose-uronate ketol-isomerase (276 aa).

Zn(2+)-binding residues include H194, H196, E201, and H243.

This sequence belongs to the KduI family. Zn(2+) serves as cofactor.

The catalysed reaction is 5-dehydro-4-deoxy-D-glucuronate = 3-deoxy-D-glycero-2,5-hexodiulosonate. It functions in the pathway glycan metabolism; pectin degradation; 2-dehydro-3-deoxy-D-gluconate from pectin: step 4/5. Functionally, catalyzes the isomerization of 5-dehydro-4-deoxy-D-glucuronate to 3-deoxy-D-glycero-2,5-hexodiulosonate. The chain is 4-deoxy-L-threo-5-hexosulose-uronate ketol-isomerase from Lachnoclostridium phytofermentans (strain ATCC 700394 / DSM 18823 / ISDg) (Clostridium phytofermentans).